The chain runs to 554 residues: 7-epi-sesquithujene synthase (554 aa).

The Mg(2+) site is built by D308 and D312. Positions 308, 312, 449, and 452 each coordinate substrate. The DDXXD motif signature appears at 308–312 (DDMFD). N452, S456, and E460 together coordinate Mg(2+).

Belongs to the terpene synthase family. Monomer. It depends on Mg(2+) as a cofactor. Mn(2+) is required as a cofactor. As to expression, highly expressed in the husk. Detected in leaf sheaths and leaves.

Its subcellular location is the cytoplasm. It carries out the reaction (2E,6E)-farnesyl diphosphate = 7-epi-sesquithujene + diphosphate. The catalysed reaction is (2E,6E)-farnesyl diphosphate = (1S,5S,6R)-alpha-bergamotene + diphosphate. It catalyses the reaction (2E,6E)-farnesyl diphosphate = (E)-beta-farnesene + diphosphate. The enzyme catalyses (2E,6E)-farnesyl diphosphate = (S)-beta-bisabolene + diphosphate. It carries out the reaction (2Z,6E)-farnesyl diphosphate = (-)-beta-curcumene + diphosphate. The catalysed reaction is (2E,6E)-farnesyl diphosphate = gamma-curcumene + diphosphate. It catalyses the reaction (2E,6E)-farnesyl diphosphate = sesquisabinene A + diphosphate. It participates in secondary metabolite biosynthesis; terpenoid biosynthesis. In terms of biological role, sesquiterpene synthase involved in the production after herbivore attack of a blend of volatiles that attracts natural enemies of herbivores. Converts farnesyl diphosphate to (S)-beta-bisabolene and 7-epi-sesquithujene, along with a mixture of more than 20 other minor sesquiterpene olefins. Can also act in vitro as a monoterpene synthase, converting geranyl diphosphate to (S)-(-)-limonene, beta-myrcene and 11 other monoterpenes. This chain is 7-epi-sesquithujene synthase, found in Zea mays (Maize).